The primary structure comprises 473 residues: Sulfhydrylase-like protein lolC2 (473 aa).

An N6-(pyridoxal phosphate)lysine modification is found at Lys226.

It belongs to the trans-sulfuration enzymes family. Requires pyridoxal 5'-phosphate as cofactor.

Its pathway is alkaloid biosynthesis. In terms of biological role, sulfhydrylase-like protein; part of the gene cluster that mediates the biosynthesis of loline alkaloids, potent insecticidal agents composed of a pyrrolizidine ring system and an uncommon ether bridge linking carbons 2 and 7. Lolines are structurally differentiated by the various modifications of the L-amino group and include norloline, loline, N-methylloline, N-acetylloline, N-acetylnorloline, and N-formylloline. The first committed step is the condensation of O-acetyl-L-homoserine (derived from L-aspartic acid) and L-proline, probably catalyzed by the gamma-type pyridoxal 5'-phosphate(PLP)-dependent enzyme lolC, to give the diamino diacid, NACPP. Ensuing cyclization, decarboxylation, and acetylation steps yield 1-exo-acetamidopyrrolizidine (AcAP). LolO is required for installation of the ether bridge upon the pathway intermediate, 1-exo-acetamidopyrrolizidine (AcAP). In sequential 2-oxoglutarate- and O(2)-consuming steps, lolO removes hydrogens from C2 and C7 of AcAP to form both carbon-oxygen bonds in N-acetylnorloline (NANL), the precursor to all other lolines. The enzymes lolD, lolE, lolF and lolT have also been proposed to be involved in the ether-bridge installation. Further processing of the exocyclic moiety of NANL by fungal N-acetamidase (LolN), methyltransferase (LolM), and cytochrome P450 (LolP) enzymes, with occasional involvement of a plant acetyltransferase, generates the other known lolines. LolN transforms NANL to norlonine which is monomethylated and dimethylated to respectively lonine and N-methyllonine (NML) by lolM. LolP catalyzes hydroxylation of the methyl group in N-methylloline (NML) and further oxygenation to N-formylloline (NFL). A plant acetyltransferase is responsible for the acetylation of loline to form N-acetylloline (NAL). LolA might interact with aspartate kinase to prevent feedback inhibition of its activity by these end products and thereby promote production of L-homoserine from L-aspartate. In Epichloe uncinata (Endophyte fungus), this protein is Sulfhydrylase-like protein lolC2.